A 148-amino-acid chain; its full sequence is Cell division protein SepF (148 aa).

Residues 1–59 form a disordered region; it reads MNNKFKDFFGFGDNDSYEERDAYEEHYDEQEEMQNSNRPTNSRDSNVVSIKAGQAGSGP. A compositionally biased stretch (polar residues) spans 33–48; sequence MQNSNRPTNSRDSNVV.

This sequence belongs to the SepF family. Homodimer. Interacts with FtsZ.

The protein localises to the cytoplasm. In terms of biological role, cell division protein that is part of the divisome complex and is recruited early to the Z-ring. Probably stimulates Z-ring formation, perhaps through the cross-linking of FtsZ protofilaments. Its function overlaps with FtsA. In Lactobacillus delbrueckii subsp. bulgaricus (strain ATCC BAA-365 / Lb-18), this protein is Cell division protein SepF.